A 564-amino-acid chain; its full sequence is Proline--tRNA ligase (564 aa).

It belongs to the class-II aminoacyl-tRNA synthetase family. ProS type 1 subfamily. In terms of assembly, homodimer.

Its subcellular location is the cytoplasm. The catalysed reaction is tRNA(Pro) + L-proline + ATP = L-prolyl-tRNA(Pro) + AMP + diphosphate. In terms of biological role, catalyzes the attachment of proline to tRNA(Pro) in a two-step reaction: proline is first activated by ATP to form Pro-AMP and then transferred to the acceptor end of tRNA(Pro). As ProRS can inadvertently accommodate and process non-cognate amino acids such as alanine and cysteine, to avoid such errors it has two additional distinct editing activities against alanine. One activity is designated as 'pretransfer' editing and involves the tRNA(Pro)-independent hydrolysis of activated Ala-AMP. The other activity is designated 'posttransfer' editing and involves deacylation of mischarged Ala-tRNA(Pro). The misacylated Cys-tRNA(Pro) is not edited by ProRS. The sequence is that of Proline--tRNA ligase from Sulfurihydrogenibium sp. (strain YO3AOP1).